The following is a 669-amino-acid chain: UvrABC system protein B (669 aa).

A Helicase ATP-binding domain is found at 26–414; sequence EGLEDGLAHQ…SGDVVEQVVR (389 aa). ATP is bound at residue 39-46; the sequence is GVTGSGKT. A Beta-hairpin motif is present at residues 92-115; sequence YYDYYQPEAYVPSSDTFIEKDASV. Residues 431–597 form the Helicase C-terminal domain; it reads QVDDLLSEIR…GLNKKINDIL (167 aa). One can recognise a UVR domain in the interval 629–664; the sequence is ESKIRELEAKMYQHAQDLEFEQAASVRDQVQALREQ.

This sequence belongs to the UvrB family. Forms a heterotetramer with UvrA during the search for lesions. Interacts with UvrC in an incision complex.

It localises to the cytoplasm. Its function is as follows. The UvrABC repair system catalyzes the recognition and processing of DNA lesions. A damage recognition complex composed of 2 UvrA and 2 UvrB subunits scans DNA for abnormalities. Upon binding of the UvrA(2)B(2) complex to a putative damaged site, the DNA wraps around one UvrB monomer. DNA wrap is dependent on ATP binding by UvrB and probably causes local melting of the DNA helix, facilitating insertion of UvrB beta-hairpin between the DNA strands. Then UvrB probes one DNA strand for the presence of a lesion. If a lesion is found the UvrA subunits dissociate and the UvrB-DNA preincision complex is formed. This complex is subsequently bound by UvrC and the second UvrB is released. If no lesion is found, the DNA wraps around the other UvrB subunit that will check the other stand for damage. The protein is UvrABC system protein B of Photorhabdus laumondii subsp. laumondii (strain DSM 15139 / CIP 105565 / TT01) (Photorhabdus luminescens subsp. laumondii).